The following is a 316-amino-acid chain: Ribosomal protein L11 methyltransferase (316 aa).

4 residues coordinate S-adenosyl-L-methionine: T157, G178, D200, and N243.

This sequence belongs to the methyltransferase superfamily. PrmA family.

The protein resides in the cytoplasm. It carries out the reaction L-lysyl-[protein] + 3 S-adenosyl-L-methionine = N(6),N(6),N(6)-trimethyl-L-lysyl-[protein] + 3 S-adenosyl-L-homocysteine + 3 H(+). Its function is as follows. Methylates ribosomal protein L11. The chain is Ribosomal protein L11 methyltransferase from Streptococcus pneumoniae (strain Hungary19A-6).